The following is a 95-amino-acid chain: MGKGTGSFGKRRNKSHTLCVRCGRRSFHIQKSRCSACAYPAARKRTYNWSVKAIRRKTTGTGRMRYLRNVPRRFKTGFREGTEAKPRSKASASSA.

Zn(2+) is bound by residues Cys-19, Cys-22, Cys-34, and Cys-37. The C4-type zinc finger occupies 19–37 (CVRCGRRSFHIQKSRCSAC). Positions 73–95 (RFKTGFREGTEAKPRSKASASSA) are disordered. A compositionally biased stretch (basic and acidic residues) spans 77 to 86 (GFREGTEAKP).

This sequence belongs to the eukaryotic ribosomal protein eL37 family. Requires Zn(2+) as cofactor.

Its function is as follows. Binds to the 23S rRNA. This chain is Large ribosomal subunit protein eL37x (RPL37C), found in Arabidopsis thaliana (Mouse-ear cress).